A 308-amino-acid polypeptide reads, in one-letter code: Pantothenate kinase (308 aa).

91–98 serves as a coordination point for ATP; sequence GSVAVGKS.

The protein belongs to the prokaryotic pantothenate kinase family.

It is found in the cytoplasm. The catalysed reaction is (R)-pantothenate + ATP = (R)-4'-phosphopantothenate + ADP + H(+). It participates in cofactor biosynthesis; coenzyme A biosynthesis; CoA from (R)-pantothenate: step 1/5. The sequence is that of Pantothenate kinase from Lacticaseibacillus paracasei (strain ATCC 334 / BCRC 17002 / CCUG 31169 / CIP 107868 / KCTC 3260 / NRRL B-441) (Lactobacillus paracasei).